A 177-amino-acid polypeptide reads, in one-letter code: Large ribosomal subunit protein uL6 (177 aa).

The protein belongs to the universal ribosomal protein uL6 family. As to quaternary structure, part of the 50S ribosomal subunit.

Functionally, this protein binds to the 23S rRNA, and is important in its secondary structure. It is located near the subunit interface in the base of the L7/L12 stalk, and near the tRNA binding site of the peptidyltransferase center. This Pseudomonas entomophila (strain L48) protein is Large ribosomal subunit protein uL6.